A 110-amino-acid chain; its full sequence is Nucleoid-associated protein PsycPRwf_1729 (110 aa).

The protein belongs to the YbaB/EbfC family. Homodimer.

Its subcellular location is the cytoplasm. The protein localises to the nucleoid. Functionally, binds to DNA and alters its conformation. May be involved in regulation of gene expression, nucleoid organization and DNA protection. The sequence is that of Nucleoid-associated protein PsycPRwf_1729 from Psychrobacter sp. (strain PRwf-1).